The following is a 490-amino-acid chain: Betaine aldehyde dehydrogenase (490 aa).

K(+) is bound by residues Ile-27 and Asp-93. 150–152 contacts NAD(+); that stretch reads GAW. Residue Lys-162 is the Charge relay system of the active site. 176-179 is an NAD(+) binding site; the sequence is KPSE. Val-180 contacts K(+). 230-233 contributes to the NAD(+) binding site; sequence GTDT. Residue Leu-246 participates in K(+) binding. Catalysis depends on Glu-252, which acts as the Proton acceptor. NAD(+)-binding residues include Gly-254, Cys-286, and Glu-387. Cys-286 acts as the Nucleophile in catalysis. At Cys-286 the chain carries Cysteine sulfenic acid (-SOH). Residues Lys-457 and Gly-460 each contribute to the K(+) site. Glu-464 serves as the catalytic Charge relay system.

Belongs to the aldehyde dehydrogenase family. Dimer of dimers. Requires K(+) as cofactor.

It catalyses the reaction betaine aldehyde + NAD(+) + H2O = glycine betaine + NADH + 2 H(+). Its pathway is amine and polyamine biosynthesis; betaine biosynthesis via choline pathway; betaine from betaine aldehyde: step 1/1. Its function is as follows. Involved in the biosynthesis of the osmoprotectant glycine betaine. Catalyzes the irreversible oxidation of betaine aldehyde to the corresponding acid. This Pseudomonas fluorescens (strain ATCC BAA-477 / NRRL B-23932 / Pf-5) protein is Betaine aldehyde dehydrogenase.